Reading from the N-terminus, the 620-residue chain is Protein AFR1 (620 aa).

Positions 1–12 (MEGSYLSAQENQ) are enriched in polar residues. Residues 1 to 20 (MEGSYLSAQENQPIPERLIP) are disordered. A phosphoserine mark is found at Ser472 and Ser526.

To yeast YER158C.

Acts in conjunction with the alpha-factor receptor to promote morphogenesis and adaptation. This chain is Protein AFR1 (AFR1), found in Saccharomyces cerevisiae (strain ATCC 204508 / S288c) (Baker's yeast).